Consider the following 319-residue polypeptide: Multivesicular body subunit 12B (319 aa).

Residues M1–I50 form a disordered region. Pro residues predominate over residues P13–Q24. S46 and S101 each carry phosphoserine. Positions M47–R193 constitute an MABP domain. 3 positions are modified to phosphothreonine: T122, T204, and T205. The disordered stretch occupies residues P195–H222. The segment covering S200–A216 has biased composition (low complexity). S224 carries the phosphoserine modification. The 50-residue stretch at M254 to A303 folds into the UMA domain. The interval E299–S319 is disordered. Position 309 is a phosphoserine (S309).

It belongs to the MVB12 family. Component of the ESCRT-I complex (endosomal sorting complex required for transport I) which consists of TSG101, VPS28, a VPS37 protein (VPS37A to -D) and MVB12A or MVB12B in a 1:1:1:1 stoichiometry. Interacts with TSG101; the association appears to be mediated by the TSG101-VPS37 binary subcomplex. Interacts with VPS28. Interacts with VPS37B; the association appears to be mediated by the TSG101-VPS37 binary subcomplex. Interacts with VPS37C; the association appears to be mediated by the TSG101-VPS37 binary subcomplex.

Its subcellular location is the endosome. The protein localises to the late endosome membrane. Component of the ESCRT-I complex, a regulator of vesicular trafficking process. Required for the sorting of endocytic ubiquitinated cargos into multivesicular bodies. In Homo sapiens (Human), this protein is Multivesicular body subunit 12B (MVB12B).